The sequence spans 332 residues: L-lactate dehydrogenase A chain (332 aa).

NAD(+) is bound by residues Gly-29 to Lys-57 and Arg-99. 3 residues coordinate substrate: Arg-106, Asn-138, and Arg-169. NAD(+) is bound at residue Asn-138. His-193 functions as the Proton acceptor in the catalytic mechanism. Substrate is bound at residue Thr-248.

This sequence belongs to the LDH/MDH superfamily. LDH family. In terms of assembly, homotetramer.

It is found in the cytoplasm. The enzyme catalyses (S)-lactate + NAD(+) = pyruvate + NADH + H(+). The protein operates within fermentation; pyruvate fermentation to lactate; (S)-lactate from pyruvate: step 1/1. Its function is as follows. Interconverts simultaneously and stereospecifically pyruvate and lactate with concomitant interconversion of NADH and NAD(+). The polypeptide is L-lactate dehydrogenase A chain (ldha) (Eleginops maclovinus (Patagonian blennie)).